The chain runs to 188 residues: MAERANDIRPGQVLEHNGGLFLVVSIMHTQPGKGGAYIQAEMKNIKTGAKLYERFRSDATIRRAILDEEEYIYLFTEGNIVNLMHPSNYEQITINLDLLEEKKIYLQDNMRIKVVTYQDKIIFAHVPDYVRLTVKETESFIKGQTITSSYKPAVLENGMRINVPQFIKEEDKIVVYTPDDSYYERVKE.

Belongs to the elongation factor P family.

The protein resides in the cytoplasm. Its pathway is protein biosynthesis; polypeptide chain elongation. Its function is as follows. Involved in peptide bond synthesis. Stimulates efficient translation and peptide-bond synthesis on native or reconstituted 70S ribosomes in vitro. Probably functions indirectly by altering the affinity of the ribosome for aminoacyl-tRNA, thus increasing their reactivity as acceptors for peptidyl transferase. In Wolbachia sp. subsp. Brugia malayi (strain TRS), this protein is Elongation factor P.